The primary structure comprises 638 residues: 9-cis-epoxycarotenoid dioxygenase NCED1, chloroplastic (638 aa).

Residues 1-80 (MQRICPAHCS…QTEQEDEQLV (80 aa)) constitute a chloroplast transit peptide. Low complexity-rich tracts occupy residues 28-37 (AASAAPQSPS), 44-69 (ASAA…TRTP), and 92-102 (TTNGRAAPSQS). Disordered stretches follow at residues 28-80 (AASA…EQLV) and 92-113 (TTNG…PAAA). Fe cation-binding residues include histidine 331, histidine 380, histidine 446, and histidine 624.

This sequence belongs to the carotenoid oxygenase family. Fe(2+) serves as cofactor.

The protein resides in the plastid. The protein localises to the chloroplast. The enzyme catalyses a 9-cis-epoxycarotenoid + O2 = a 12'-apo-carotenal + 2-cis,4-trans-xanthoxin. It catalyses the reaction 9-cis-violaxanthin + O2 = (3S,5R,6S)-5,6-epoxy-3-hydroxy-5,6-dihydro-12'-apo-beta-caroten-12'-al + 2-cis,4-trans-xanthoxin. It carries out the reaction 9'-cis-neoxanthin + O2 = (3S,5R,6R)-3,5-dihydroxy-6,7-didehydro-5,6-dihydro-12'-apo-beta-caroten-12'-al + 2-cis,4-trans-xanthoxin. Functionally, has a 11,12(11',12') 9-cis epoxycarotenoid cleavage activity. Catalyzes the first step of abscisic-acid biosynthesis from carotenoids. This Oryza sativa subsp. japonica (Rice) protein is 9-cis-epoxycarotenoid dioxygenase NCED1, chloroplastic.